We begin with the raw amino-acid sequence, 420 residues long: Putative competence-damage inducible protein (420 aa).

This sequence belongs to the CinA family.

The protein is Putative competence-damage inducible protein of Lactiplantibacillus plantarum (strain ATCC BAA-793 / NCIMB 8826 / WCFS1) (Lactobacillus plantarum).